A 180-amino-acid polypeptide reads, in one-letter code: MARLSAFNFKAWIDEHRHLLKPPVGNKMVYEDADLMVTVVGGPNKRTDYHDDPVEEFFYQLEGDMVLKLYDGEEFYDVPIREGEIFLLPPHMRHSPQRPQEGSVGLVIEAKRPEGAADAIEWYCFNCGNLVHRAELMLTSIVDDLPPVYQAFYASEEARTCGSCGEVHPGKEPPEGWVTL.

Arg46 is an O2 binding site. The Fe cation site is built by His50, Glu56, and His94. Glu56 is a substrate binding site. Substrate is bound by residues Arg98 and Glu109. 4 residues coordinate Fe cation: Cys124, Cys127, Cys161, and Cys164.

It belongs to the 3-HAO family. As to quaternary structure, homodimer. Requires Fe(2+) as cofactor.

The catalysed reaction is 3-hydroxyanthranilate + O2 = (2Z,4Z)-2-amino-3-carboxymuconate 6-semialdehyde. Its pathway is cofactor biosynthesis; NAD(+) biosynthesis; quinolinate from L-kynurenine: step 3/3. Functionally, catalyzes the oxidative ring opening of 3-hydroxyanthranilate to 2-amino-3-carboxymuconate semialdehyde, which spontaneously cyclizes to quinolinate. The polypeptide is 3-hydroxyanthranilate 3,4-dioxygenase (Jannaschia sp. (strain CCS1)).